The chain runs to 199 residues: V-type ATP synthase subunit E (199 aa).

Belongs to the V-ATPase E subunit family.

Functionally, produces ATP from ADP in the presence of a proton gradient across the membrane. This is V-type ATP synthase subunit E from Borrelia garinii subsp. bavariensis (strain ATCC BAA-2496 / DSM 23469 / PBi) (Borreliella bavariensis).